Consider the following 496-residue polypeptide: Glycerol kinase (496 aa).

ADP is bound at residue Thr-11. Positions 11, 12, and 13 each coordinate ATP. Thr-11 contributes to the sn-glycerol 3-phosphate binding site. Position 15 (Arg-15) interacts with ADP. Residues Arg-81, Glu-82, Tyr-133, and Asp-242 each contribute to the sn-glycerol 3-phosphate site. Glycerol contacts are provided by Arg-81, Glu-82, Tyr-133, Asp-242, and Gln-243. The ADP site is built by Thr-264 and Gly-307. Residues Thr-264, Gly-307, Gln-311, and Gly-408 each contribute to the ATP site. ADP-binding residues include Gly-408 and Asn-412.

Belongs to the FGGY kinase family.

The enzyme catalyses glycerol + ATP = sn-glycerol 3-phosphate + ADP + H(+). Its pathway is polyol metabolism; glycerol degradation via glycerol kinase pathway; sn-glycerol 3-phosphate from glycerol: step 1/1. Its activity is regulated as follows. Inhibited by fructose 1,6-bisphosphate (FBP). Functionally, key enzyme in the regulation of glycerol uptake and metabolism. Catalyzes the phosphorylation of glycerol to yield sn-glycerol 3-phosphate. The sequence is that of Glycerol kinase from Aromatoleum aromaticum (strain DSM 19018 / LMG 30748 / EbN1) (Azoarcus sp. (strain EbN1)).